A 798-amino-acid polypeptide reads, in one-letter code: Bromodomain-containing protein 2 (798 aa).

Met-1 carries the N-acetylmethionine modification. Residues 1-21 (MLQNVTPHKLPGEGNAGLLGL) are disordered. Position 6 is a phosphothreonine (Thr-6). Ser-36 carries the post-translational modification Phosphoserine. The interval 53–72 (LQLAPANPPPPEVSNPKKPG) is disordered. The Bromo 1 domain maps to 73 to 179 (RVTNQLQYLH…KIFLQKVASM (107 aa)). 6 residues coordinate a protein: Asp-111, Tyr-154, Asn-155, Lys-156, Asp-159, and Asp-160. Disordered stretches follow at residues 267-348 (PPAQ…LSEQ), 454-645 (DEPL…YDEK), and 736-798 (KRLQ…SDSG). Positions 284–297 (TTTPTPTAILAPGS) are enriched in low complexity. Residues Ser-297, Ser-300, and Ser-304 each carry the phosphoserine modification. The span at 315–331 (MRRESGRPIKPPRKDLP) shows a compositional bias: basic and acidic residues. Residues 343–452 (GKLSEQLKHC…DVFEFRYAKM (110 aa)) form the Bromo 2 domain. Over residues 480-512 (SSEESSSESSSEEEEEEEEDEDEEESESSDSEE) the composition is skewed to acidic residues. The segment covering 542-564 (KPKRKREKKEKKKKRKAEKHRGR) has biased composition (basic residues). The short motif at 553–557 (KKKRK) is the Nuclear localization signal element. In terms of domain architecture, NET spans 630-712 (DSEEEEESRP…SCLRKKPRKP (83 aa)). Ser-631 carries the post-translational modification Phosphoserine. Over residues 772 to 792 (SASSSSSDSSSSSSSSSSSDT) the composition is skewed to low complexity.

This sequence belongs to the BET family. In terms of assembly, homodimer. Interacts with E2F1. Interacts with (acetylated) STAT3; promoting STAT3 recruitment to chromatin. Interacts with CTCF; promoting BRD2 recruitment to chromatin. Predominantly expressed in the testis, followed by ovary, placenta, embryo and to a lower extent in somatic tissues.

It localises to the nucleus. It is found in the chromosome. Chromatin reader protein that specifically recognizes and binds histone H4 acetylated at 'Lys-5' and 'Lys-12' (H4K5ac and H4K12ac, respectively), thereby controlling gene expression and remodeling chromatin structures. Recruits transcription factors and coactivators to target gene sites, and activates RNA polymerase II machinery for transcriptional elongation. Plays a key role in genome compartmentalization via its association with CTCF and cohesin: recruited to chromatin by CTCF and promotes formation of topologically associating domains (TADs) via its ability to bind acetylated histones, contributing to CTCF boundary formation and enhancer insulation. Also recognizes and binds acetylated non-histone proteins, such as STAT3. Involved in inflammatory response by regulating differentiation of naive CD4(+) T-cells into T-helper Th17: recognizes and binds STAT3 acetylated at 'Lys-87', promoting STAT3 recruitment to chromatin. In addition to acetylated lysines, also recognizes and binds lysine residues on histones that are both methylated and acetylated on the same side chain to form N6-acetyl-N6-methyllysine (Kacme), an epigenetic mark of active chromatin associated with increased transcriptional initiation. Specifically binds histone H4 acetyl-methylated at 'Lys-5' and 'Lys-12' (H4K5acme and H4K12acme, respectively). This is Bromodomain-containing protein 2 from Mus musculus (Mouse).